The chain runs to 339 residues: tRNA dimethylallyltransferase (339 aa).

33–40 (GPTASGKT) is a binding site for ATP. A substrate-binding site is contributed by 35–40 (TASGKT). Interaction with substrate tRNA regions lie at residues 58 to 61 (DSLL) and 182 to 186 (QRIQR).

The protein belongs to the IPP transferase family. As to quaternary structure, monomer. Mg(2+) serves as cofactor.

The catalysed reaction is adenosine(37) in tRNA + dimethylallyl diphosphate = N(6)-dimethylallyladenosine(37) in tRNA + diphosphate. Catalyzes the transfer of a dimethylallyl group onto the adenine at position 37 in tRNAs that read codons beginning with uridine, leading to the formation of N6-(dimethylallyl)adenosine (i(6)A). The protein is tRNA dimethylallyltransferase of Acidithiobacillus ferrooxidans (strain ATCC 23270 / DSM 14882 / CIP 104768 / NCIMB 8455) (Ferrobacillus ferrooxidans (strain ATCC 23270)).